Consider the following 269-residue polypeptide: Protein NETWORKED 3A (269 aa).

The 82-residue stretch at 6-87 (SKWWWIGNHN…ERYDLLRPSS (82 aa)) folds into the NAB domain. Positions 87–113 (SVHKHGSDSESHEKSSTCDESSWSEAC) are disordered. Basic and acidic residues predominate over residues 91–103 (HGSDSESHEKSST). Positions 155 to 214 (NGNSEMMKIEIERLREENKVYSEMVREKDEEKREAIRQMSVAIQMLKEENSELKKRVTNT) form a coiled coil.

It belongs to the NET family.

It is found in the cytoplasm. The protein resides in the cytoskeleton. Its subcellular location is the nucleus membrane. Plant-specific actin binding protein. May be part of a membrane-cytoskeletal adapter complex. In Arabidopsis thaliana (Mouse-ear cress), this protein is Protein NETWORKED 3A.